The chain runs to 142 residues: Large ribosomal subunit protein uL13 (142 aa).

It belongs to the universal ribosomal protein uL13 family. In terms of assembly, part of the 50S ribosomal subunit.

In terms of biological role, this protein is one of the early assembly proteins of the 50S ribosomal subunit, although it is not seen to bind rRNA by itself. It is important during the early stages of 50S assembly. The polypeptide is Large ribosomal subunit protein uL13 (Psychromonas ingrahamii (strain DSM 17664 / CCUG 51855 / 37)).